The primary structure comprises 157 residues: MSLIPSFFGNNRRSNSIFDPFSLDVWDPFKELQFPSSLSGETSAITNARVDWKETAEAHVFKADLPGMKKEEVKVEIEDDSVLKISGERHVEKEEKQDTWHRVERSSGQFSRKFKLPENVKMDQVKASMENGVLTVTVPKVEEAKKKAQVKSIDISG.

In terms of domain architecture, sHSP spans 41 to 156; that stretch reads ETSAITNARV…KAQVKSIDIS (116 aa).

This sequence belongs to the small heat shock protein (HSP20) family. As to quaternary structure, homodimer under normal physiological conditions. Aggregates in high oligomeric complexes after heat shock. Binds to AKR2A and to chloroplasts. Expressed ubiquitously at low levels under normal physiological conditions.

The protein localises to the cytoplasm. Functionally, cytosolic mediator for sorting and targeting of nascent chloroplast outer envelope membrane (OEM) proteins to the chloroplast. Functions as an AKR2A cofactor to facilitate the targeting of OEP7 to chloroplasts. This Arabidopsis thaliana (Mouse-ear cress) protein is 17.8 kDa class I heat shock protein (HSP17.8).